The chain runs to 147 residues: Large ribosomal subunit protein uL16 (147 aa).

It belongs to the universal ribosomal protein uL16 family. As to quaternary structure, part of the 50S ribosomal subunit.

Functionally, binds 23S rRNA and is also seen to make contacts with the A and possibly P site tRNAs. This Clostridium tetani (strain Massachusetts / E88) protein is Large ribosomal subunit protein uL16.